The primary structure comprises 445 residues: Tubulin beta-1 chain (445 aa).

The short motif at 1 to 4 (MREI) is the MREI motif element. Residues Q11, E69, S138, G142, T143, G144, N204, and N226 each contribute to the GTP site. E69 contributes to the Mg(2+) binding site. The interval 424-445 (QYQDATADEQGEFEEEGEEDEA) is disordered. The span at 429–445 (TADEQGEFEEEGEEDEA) shows a compositional bias: acidic residues. The residue at position 438 (E438) is a 5-glutamyl polyglutamate.

The protein belongs to the tubulin family. As to quaternary structure, dimer of alpha and beta chains. A typical microtubule is a hollow water-filled tube with an outer diameter of 25 nm and an inner diameter of 15 nM. Alpha-beta heterodimers associate head-to-tail to form protofilaments running lengthwise along the microtubule wall with the beta-tubulin subunit facing the microtubule plus end conferring a structural polarity. Microtubules usually have 13 protofilaments but different protofilament numbers can be found in some organisms and specialized cells. Requires Mg(2+) as cofactor. Some glutamate residues at the C-terminus are polyglycylated, resulting in polyglycine chains on the gamma-carboxyl group. Glycylation is mainly limited to tubulin incorporated into axonemes (cilia and flagella) whereas glutamylation is prevalent in neuronal cells, centrioles, axonemes, and the mitotic spindle. Both modifications can coexist on the same protein on adjacent residues, and lowering polyglycylation levels increases polyglutamylation, and reciprocally. The precise function of polyglycylation is still unclear. Post-translationally, some glutamate residues at the C-terminus are polyglutamylated, resulting in polyglutamate chains on the gamma-carboxyl group. Polyglutamylation plays a key role in microtubule severing by spastin (SPAST). SPAST preferentially recognizes and acts on microtubules decorated with short polyglutamate tails: severing activity by SPAST increases as the number of glutamates per tubulin rises from one to eight, but decreases beyond this glutamylation threshold. In terms of tissue distribution, highly expressed in skeletal muscle.

The protein localises to the cytoplasm. Its subcellular location is the cytoskeleton. Functionally, tubulin is the major constituent of microtubules, a cylinder consisting of laterally associated linear protofilaments composed of alpha- and beta-tubulin heterodimers. Microtubules grow by the addition of GTP-tubulin dimers to the microtubule end, where a stabilizing cap forms. Below the cap, tubulin dimers are in GDP-bound state, owing to GTPase activity of alpha-tubulin. The chain is Tubulin beta-1 chain from Gallus gallus (Chicken).